Reading from the N-terminus, the 489-residue chain is Ent-kaurenoic acid oxidase 2 (489 aa).

The chain crosses the membrane as a helical span at residues 5-25 (GLILMWFPLIILGLFVLKWVL). Residue Cys436 coordinates heme.

The protein belongs to the cytochrome P450 family. Heme is required as a cofactor. In terms of tissue distribution, widely expressed. Highly expressed in influorescence stem, influorescence, and silique tissue. Weakly expressed in cauline and rosette leaves. Expressed at a weaker level in stem and influorescence than AtKAO1/CYP88A3.

The protein resides in the endoplasmic reticulum membrane. It carries out the reaction ent-kaur-16-en-19-oate + 3 reduced [NADPH--hemoprotein reductase] + 3 O2 = gibberellin A12 + 3 oxidized [NADPH--hemoprotein reductase] + 4 H2O + 4 H(+). The enzyme catalyses ent-kaur-16-en-19-oate + reduced [NADPH--hemoprotein reductase] + O2 = ent-7alpha-hydroxykaur-16-en-19-oate + oxidized [NADPH--hemoprotein reductase] + H2O + H(+). It catalyses the reaction ent-7alpha-hydroxykaur-16-en-19-oate + reduced [NADPH--hemoprotein reductase] + O2 = gibberellin A12 aldehyde + oxidized [NADPH--hemoprotein reductase] + 2 H2O + H(+). The catalysed reaction is gibberellin A12 aldehyde + reduced [NADPH--hemoprotein reductase] + O2 = gibberellin A12 + oxidized [NADPH--hemoprotein reductase] + H2O + 2 H(+). It functions in the pathway plant hormone biosynthesis; gibberellin biosynthesis. Its function is as follows. Catalyzes three successive oxidations of ent-kaurenoic acid giving gibberellin 12 (GA12), a key step in gibberellins (GAs) biosynthesis. GAs, which are involved many processes, including stem elongation, play a central role in plant development. In Arabidopsis thaliana (Mouse-ear cress), this protein is Ent-kaurenoic acid oxidase 2.